A 197-amino-acid polypeptide reads, in one-letter code: CASP-like protein 1B2 (197 aa).

N-acetylalanine is present on alanine 2. Over 2 to 17 (AREKIVVAGGTTKSWK) the chain is Cytoplasmic. A helical membrane pass occupies residues 18 to 38 (LLLGLRIFAFMATLAAAIVMS). Residues 39-69 (LNKETKTLVVATIGTVPIKATLTAKFQHTPA) are Extracellular-facing. A helical transmembrane segment spans residues 70–90 (FVFFVIANVMVSFHNLLMIVV). Residues 91 to 106 (QIFSRKLEYKGLRLLS) are Cytoplasmic-facing. The chain crosses the membrane as a helical span at residues 107-127 (IAILDMLNATLVSAAANAAVF). Residues 128–156 (VAELGKNGNKHAKWNKVCDRFTTYCDHGA) are Extracellular-facing. A helical transmembrane segment spans residues 157 to 177 (GAIIAAFAGVILMLLVSAVSI). The Cytoplasmic segment spans residues 178–197 (SRLLINSKNFSTTATTTSVV).

It belongs to the Casparian strip membrane proteins (CASP) family. In terms of assembly, homodimer and heterodimers.

The protein resides in the cell membrane. The sequence is that of CASP-like protein 1B2 from Arabidopsis thaliana (Mouse-ear cress).